We begin with the raw amino-acid sequence, 186 residues long: Thioredoxin M2, chloroplastic (186 aa).

Residues 1–72 (MAAFTCTSRP…RVSRLRRAVV (72 aa)) constitute a chloroplast transit peptide. Residues 73 to 186 (CEAQETTTDI…LTSSLDKFLP (114 aa)) enclose the Thioredoxin domain. Active-site nucleophile residues include Cys110 and Cys113. Cys110 and Cys113 form a disulfide bridge.

This sequence belongs to the thioredoxin family. Plant M-type subfamily. Interacts with G6PD1 and G6PD4. Interacts with PGL3.

Its subcellular location is the plastid. The protein localises to the chloroplast stroma. In terms of biological role, thiol-disulfide oxidoreductase that may participate in various redox reactions. May activate NADP-malate dehydrogenase. The chain is Thioredoxin M2, chloroplastic from Arabidopsis thaliana (Mouse-ear cress).